We begin with the raw amino-acid sequence, 325 residues long: Melanocortin receptor 5 (325 aa).

The Extracellular portion of the chain corresponds to 1–37 (MNSSFHLHFLDLGLNTTDGNLSGLSVQNASSLCEDMG). 4 N-linked (GlcNAc...) asparagine glycosylation sites follow: N2, N15, N20, and N28. Residues 38–61 (IAVEVFLALGLISLLENILVIGAI) form a helical membrane-spanning segment. At 62 to 73 (VRNRNLHTPMYF) the chain is on the cytoplasmic side. Residues 74–97 (FVGSLAVADMLVSLSNSWETITIY) form a helical membrane-spanning segment. At 98–114 (LLTNKHLVMADASVRHL) the chain is on the extracellular side. Residues 115-138 (DNVFDSMICISVVASMCSLLAIAV) traverse the membrane as a helical segment. The Cytoplasmic segment spans residues 139–155 (DRYVTIFCALRYQRIMT). The chain crosses the membrane as a helical span at residues 156 to 179 (GRRSGAIIGGIWAFCASCGTVFIV). Topologically, residues 180–186 (YYESTYV) are extracellular. Residues 187 to 211 (VICLIAMFLTMLLLMASLYTHMFLL) traverse the membrane as a helical segment. At 212–239 (ARTHIRRIATLPGHSSVRQRTGVKGAIT) the chain is on the cytoplasmic side. Residues 240–265 (LAMLLGVFIVCWAPFFLHLILMISCP) form a helical membrane-spanning segment. The Extracellular portion of the chain corresponds to 266-273 (HNLYCSCF). The helical transmembrane segment at 274-297 (MSHFNMYLILIMCNSVIDPLIYAF) threads the bilayer. The Cytoplasmic segment spans residues 298–325 (RSQEMRKTFKEIVCFQSFRTPCRFPSRY). C311 carries S-palmitoyl cysteine lipidation.

This sequence belongs to the G-protein coupled receptor 1 family.

Its subcellular location is the cell membrane. Receptor for MSH (alpha, beta and gamma) and ACTH. The activity of this receptor is mediated by G proteins which activate adenylate cyclase. This receptor is a possible mediator of the immunomodulation properties of melanocortins. This is Melanocortin receptor 5 (MC5R) from Bos taurus (Bovine).